Reading from the N-terminus, the 947-residue chain is Bifunctional glutamine synthetase adenylyltransferase/adenylyl-removing enzyme (947 aa).

Residues 1-440 (MTPLSSPLSQ…VFNELIGDDE (440 aa)) form an adenylyl removase region. An adenylyl transferase region spans residues 450 to 947 (SEPWREVWQD…ASWRKWLVAV (498 aa)).

Belongs to the GlnE family. It depends on Mg(2+) as a cofactor.

It catalyses the reaction [glutamine synthetase]-O(4)-(5'-adenylyl)-L-tyrosine + phosphate = [glutamine synthetase]-L-tyrosine + ADP. The enzyme catalyses [glutamine synthetase]-L-tyrosine + ATP = [glutamine synthetase]-O(4)-(5'-adenylyl)-L-tyrosine + diphosphate. Its function is as follows. Involved in the regulation of glutamine synthetase GlnA, a key enzyme in the process to assimilate ammonia. When cellular nitrogen levels are high, the C-terminal adenylyl transferase (AT) inactivates GlnA by covalent transfer of an adenylyl group from ATP to specific tyrosine residue of GlnA, thus reducing its activity. Conversely, when nitrogen levels are low, the N-terminal adenylyl removase (AR) activates GlnA by removing the adenylyl group by phosphorolysis, increasing its activity. The regulatory region of GlnE binds the signal transduction protein PII (GlnB) which indicates the nitrogen status of the cell. This Salmonella newport (strain SL254) protein is Bifunctional glutamine synthetase adenylyltransferase/adenylyl-removing enzyme.